Consider the following 1032-residue polypeptide: Suppression of tumorigenicity 18 protein (1032 aa).

Disordered stretches follow at residues 29-76 (RAEE…TNDH), 162-213 (GRDK…LTYN), and 325-354 (RQPK…AKCP). Basic residues predominate over residues 40 to 51 (NKRKSLLMKPRH). A compositionally biased stretch (basic and acidic residues) spans 52–76 (YSPDMDCKENPDNRNEDDGLETNDH). 6 CCHHC-type zinc fingers span residues 344–387 (PRPE…PLEI), 388–431 (LAMH…KLAM), 700–743 (RDLK…LKSL), 744–787 (MAAN…GIKM), 792–835 (EEKE…QKEN), and 845–888 (KLNK…IKKV). Positions 353, 358, 371, 377, 397, 402, 415, 421, 709, 714, 727, 733, 753, 758, 771, 777, 801, 806, 819, 825, 854, 859, 872, and 878 each coordinate Zn(2+). A coiled-coil region spans residues 905 to 974 (IEGDEEIRHL…KELAGLSQAL (70 aa)).

This sequence belongs to the MYT1 family. As to expression, detected in brain.

It localises to the nucleus. Functionally, repressor that binds to DNA sequences containing a bipartite element consisting of a direct repeat of the sequence 5'-AAAGTTT-3' separated by 2-9 nucleotides. Represses basal transcription activity from target promoters. In Rattus norvegicus (Rat), this protein is Suppression of tumorigenicity 18 protein (St18).